A 525-amino-acid chain; its full sequence is MTRLFRLCKIIFVILYHGLDQLALSGFKSRRIRALVWVLTLGRRQTRPRGERLRLALEQLGPIFVKFGQVLSTRRDLLPPDVADELAKLQDRVPPFDPKIAAAIVERSLGKPLSALFHRFDHHPVASASIAQVHFATLRGGPDDGREVAVKVLRPGMLPVIDSDLALMRDVATWMEKLWADGKRLKPREVVAEFDKYLHDELDLMREAANASQLRRNFAKSELLLVPEVFWDWCTSEVFVMERMHGVRVSHADELRAAGVDTHKLARDGVEIFFTQVFRDGFFHADMHPGNILVSVAPESLGRYIALDFGIVGALSEFDKNYLAQNFLAFFQRDYHRVALLHVESGWAPEETRVEELEGAIRACCEPYFDRPLGEISLGLVLMRLFQTSRRFNVEVQPQLVLLQKTLLNVEGLGRQLDPDLDLWKTAKPFLERWMHEQIGWRGLVDRLKIEAPQWANMLPDFPRLAHQILERHARDNGSAQTATLSALLAEQRRTNRLLSAALLFIGGFAVGIIATHVLAWLARH.

Positions 119 to 501 (RFDHHPVASA…QRRTNRLLSA (383 aa)) constitute a Protein kinase domain. ATP-binding positions include 125–133 (VASASIAQV) and Lys151. Asp286 acts as the Proton acceptor in catalysis. The chain crosses the membrane as a helical span at residues 502 to 522 (ALLFIGGFAVGIIATHVLAWL).

It belongs to the ABC1 family. UbiB subfamily.

It is found in the cell inner membrane. Its pathway is cofactor biosynthesis; ubiquinone biosynthesis [regulation]. Its function is as follows. Is probably a protein kinase regulator of UbiI activity which is involved in aerobic coenzyme Q (ubiquinone) biosynthesis. The chain is Probable protein kinase UbiB from Ralstonia nicotianae (strain ATCC BAA-1114 / GMI1000) (Ralstonia solanacearum).